The following is a 914-amino-acid chain: TRPM8 channel-associated factor 3 (914 aa).

A Peptidase M60 domain is found at 533 to 832 (NSWVSTGLYL…TYLQLQEGFG (300 aa)).

Belongs to the TCAF family.

In terms of biological role, may play a role in the regulation of the cation channel TRPM8 activity. The chain is TRPM8 channel-associated factor 3 from Rattus norvegicus (Rat).